Here is a 511-residue protein sequence, read N- to C-terminus: ATP synthase subunit alpha 1 (511 aa).

Residue G170 to T177 participates in ATP binding.

This sequence belongs to the ATPase alpha/beta chains family. As to quaternary structure, F-type ATPases have 2 components, CF(1) - the catalytic core - and CF(0) - the membrane proton channel. CF(1) has five subunits: alpha(3), beta(3), gamma(1), delta(1), epsilon(1). CF(0) has three main subunits: a(1), b(2) and c(9-12). The alpha and beta chains form an alternating ring which encloses part of the gamma chain. CF(1) is attached to CF(0) by a central stalk formed by the gamma and epsilon chains, while a peripheral stalk is formed by the delta and b chains.

Its subcellular location is the cell inner membrane. The catalysed reaction is ATP + H2O + 4 H(+)(in) = ADP + phosphate + 5 H(+)(out). Produces ATP from ADP in the presence of a proton gradient across the membrane. The alpha chain is a regulatory subunit. This chain is ATP synthase subunit alpha 1, found in Gluconobacter oxydans (strain 621H) (Gluconobacter suboxydans).